A 591-amino-acid polypeptide reads, in one-letter code: Aspartate--tRNA ligase (591 aa).

Position 175 (glutamate 175) interacts with L-aspartate. The tract at residues 199–202 is aspartate; it reads QLFK. An L-aspartate-binding site is contributed by arginine 221. ATP is bound by residues 221–223 and glutamine 230; that span reads RDE. An L-aspartate-binding site is contributed by histidine 449. Glutamate 483 contacts ATP. Residue arginine 490 coordinates L-aspartate. Residue 535–538 coordinates ATP; the sequence is GLDR.

It belongs to the class-II aminoacyl-tRNA synthetase family. Type 1 subfamily. As to quaternary structure, homodimer.

The protein resides in the cytoplasm. The catalysed reaction is tRNA(Asp) + L-aspartate + ATP = L-aspartyl-tRNA(Asp) + AMP + diphosphate. Catalyzes the attachment of L-aspartate to tRNA(Asp) in a two-step reaction: L-aspartate is first activated by ATP to form Asp-AMP and then transferred to the acceptor end of tRNA(Asp). The chain is Aspartate--tRNA ligase from Oceanobacillus iheyensis (strain DSM 14371 / CIP 107618 / JCM 11309 / KCTC 3954 / HTE831).